Reading from the N-terminus, the 597-residue chain is Mitochondrial inner membrane magnesium transporter mrs2 (597 aa).

Residues 1-56 (MLSSSHLKPSAPSATLLRFLRSQSDFLSVNSSRCARPSRSKPYVHQILPCNASSRA) constitute a mitochondrion transit peptide. A helical membrane pass occupies residues 423–443 (LMLLDLKFSIGTLGLATGTLF). The short motif at 447 to 450 (YGMN) is the YGMN element. A helical transmembrane segment spans residues 462–482 (FGAVSMTCFMITAVVCVYGLA). Positions 552–577 (AARSASADATAQRASALRSSANANGG) are enriched in low complexity. The segment at 552 to 597 (AARSASADATAQRASALRSSANANGGAPKGSEHSPTRETEASGSSA) is disordered. A compositionally biased stretch (basic and acidic residues) spans 581-591 (GSEHSPTRETE).

This sequence belongs to the CorA metal ion transporter (MIT) (TC 1.A.35) family. In terms of assembly, homopentamer. Forms homooligomers. Interacts with MFM1.

Its subcellular location is the mitochondrion inner membrane. In terms of biological role, high-conductance magnesium-selective channel that mediates the influx of magnesium into the mitochondrial matrix. Essential for the splicing of mRNA group II introns in mitochondria by affecting mitochondrial magnesium concentrations, which are critical for group II intron splicing. It also suppresses a variety of mitochondrial intron mutations and its absence may disturb the assembly of mitochondrial membrane complexes. The chain is Mitochondrial inner membrane magnesium transporter mrs2 (mrs2) from Aspergillus fumigatus (strain ATCC MYA-4609 / CBS 101355 / FGSC A1100 / Af293) (Neosartorya fumigata).